We begin with the raw amino-acid sequence, 300 residues long: tRNA-cytidine(32) 2-sulfurtransferase (300 aa).

The short motif at serine 57–serine 62 is the PP-loop motif element. [4Fe-4S] cluster-binding residues include cysteine 132, cysteine 135, and cysteine 223.

This sequence belongs to the TtcA family. As to quaternary structure, homodimer. Requires Mg(2+) as cofactor. The cofactor is [4Fe-4S] cluster.

The protein localises to the cytoplasm. It carries out the reaction cytidine(32) in tRNA + S-sulfanyl-L-cysteinyl-[cysteine desulfurase] + AH2 + ATP = 2-thiocytidine(32) in tRNA + L-cysteinyl-[cysteine desulfurase] + A + AMP + diphosphate + H(+). It functions in the pathway tRNA modification. In terms of biological role, catalyzes the ATP-dependent 2-thiolation of cytidine in position 32 of tRNA, to form 2-thiocytidine (s(2)C32). The sulfur atoms are provided by the cysteine/cysteine desulfurase (IscS) system. The polypeptide is tRNA-cytidine(32) 2-sulfurtransferase (Xanthomonas campestris pv. campestris (strain 8004)).